A 581-amino-acid chain; its full sequence is MSGGDGRGHNTGAHSTSGNINGGPTGLGVGGGASDGSGWSSENNPWGGGSGSGIHWGGGSGHGNGGGNGNSGGGSGTGGNLSAVAAPVAFGFPALSTPGAGGLAVSISAGALSAAIADIMAALKGPFKFGLWGVALYGVLPSQIAKDDPNMMSKIVTSLPADDITESPVSSLPLDKATVNVNVRVVDDVKDERQNISVVSGVPMSVPVVDAKPTERPGVFTASIPGAPVLNISVNNSTPEVQTLSPGVTNNTDKDVRPAGFTQGGNTRDAVIRFPKDSGHNAVYVSVSDVLSPDQVKQRQDEENRRQQEWDATHPVEAAERNYERARAELNQANEDVARNQERQAKAVQVYNSRKSELDAANKTLADAIAEIKQFNRFAHDPMAGGHRMWQMAGLKAQRAQTDVNNKQAAFDAAAKEKSDADAALSAAQERRKQKENKEKDAKDKLDKESKRNKPGKATGKGKPVGDKWLDDAGKDSGAPIPDRIADKLRDKEFKNFDDFRKKFWEEVSKDPDLSKQFKGSNKTNIQKGKAPFARKKDQVGGRERFELHHDKPISQDGGVYDMNNIRVTTPKRHIDIHRGK.

Disordered stretches follow at residues 1-74 (MSGG…SGGG), 242-269 (QTLS…NTRD), 293-320 (PDQV…EAAE), 421-488 (ADAA…IADK), and 513-566 (DLSK…MNNI). Residues 20–35 (INGGPTGLGVGGGASD) are compositionally biased toward gly residues. A compositionally biased stretch (low complexity) spans 36–45 (GSGWSSENNP). Residues 46-74 (WGGGSGSGIHWGGGSGHGNGGGNGNSGGG) show a composition bias toward gly residues. The span at 242–251 (QTLSPGVTNN) shows a compositional bias: polar residues. Basic and acidic residues-rich tracts occupy residues 296-320 (VKQR…EAAE), 429-452 (QERR…ESKR), and 464-475 (PVGDKWLDDAGK). Polar residues predominate over residues 518-527 (FKGSNKTNIQ). A compositionally biased stretch (basic and acidic residues) spans 535-554 (RKKDQVGGRERFELHHDKPI). Zn(2+) contacts are provided by His-549, His-574, and His-578.

The protein belongs to the colicin/pyosin nuclease family.

Functionally, this plasmid-coded bactericidal protein is an endonuclease active on both single- and double-stranded DNA but with undefined specificity. In terms of biological role, colicins are polypeptide toxins produced by and active against E.coli and closely related bacteria. In Escherichia coli, this protein is Colicin-E2 (col).